The chain runs to 425 residues: MLDLKFVQNNLDVVRESLEKRGSKLDVNEFSDLDSRRKSLLQEVESLKAERNSTSGEIAKIKREGGDASEIIARMGEVSGKIKALDEDLKDIEAAEREWLSSVPNMPDESVPFGKTEDDNPVIRHWGEKPEFDFTPREHWDLAVELGGVDFERAAKLTGARFVVLKKWGARLERALTSFMVDVQTMDHGYTEVIPPYIVNRDSLFGTGQLPKFEEDLFKLKNWEYYMIPTAEVPLTNLHRDEVLSEDDLSIAYCAPTPCFRSEAGSYGKDTKGLIRQHQFHKVEMVRFAHPDKSFEDLEKMTGHAEEILKRLGLHYRVITLCTGDMGFGSAKTYDIEVWLPGQDKYREISSCSNCVDFQARRANIKFQPKDSKKKQFVHTLNGSGLAVGRTFVAVVENYQQKDGSIVIPEALRPYMGGLEVITAE.

Position 230-232 (230-232 (TAE)) interacts with L-serine. 261-263 (RSE) is an ATP binding site. Glu-284 is an L-serine binding site. 348 to 351 (EISS) provides a ligand contact to ATP. L-serine is bound at residue Ser-384.

The protein belongs to the class-II aminoacyl-tRNA synthetase family. Type-1 seryl-tRNA synthetase subfamily. As to quaternary structure, homodimer. The tRNA molecule binds across the dimer.

The protein resides in the cytoplasm. The catalysed reaction is tRNA(Ser) + L-serine + ATP = L-seryl-tRNA(Ser) + AMP + diphosphate + H(+). The enzyme catalyses tRNA(Sec) + L-serine + ATP = L-seryl-tRNA(Sec) + AMP + diphosphate + H(+). It functions in the pathway aminoacyl-tRNA biosynthesis; selenocysteinyl-tRNA(Sec) biosynthesis; L-seryl-tRNA(Sec) from L-serine and tRNA(Sec): step 1/1. Its function is as follows. Catalyzes the attachment of serine to tRNA(Ser). Is also able to aminoacylate tRNA(Sec) with serine, to form the misacylated tRNA L-seryl-tRNA(Sec), which will be further converted into selenocysteinyl-tRNA(Sec). In Maridesulfovibrio salexigens (strain ATCC 14822 / DSM 2638 / NCIMB 8403 / VKM B-1763) (Desulfovibrio salexigens), this protein is Serine--tRNA ligase.